The following is a 200-amino-acid chain: Nucleoside triphosphate pyrophosphatase (200 aa).

The active-site Proton acceptor is the Asp79.

Belongs to the Maf family. A divalent metal cation serves as cofactor.

The protein resides in the cytoplasm. It catalyses the reaction a ribonucleoside 5'-triphosphate + H2O = a ribonucleoside 5'-phosphate + diphosphate + H(+). The enzyme catalyses a 2'-deoxyribonucleoside 5'-triphosphate + H2O = a 2'-deoxyribonucleoside 5'-phosphate + diphosphate + H(+). Functionally, nucleoside triphosphate pyrophosphatase. May have a dual role in cell division arrest and in preventing the incorporation of modified nucleotides into cellular nucleic acids. The protein is Nucleoside triphosphate pyrophosphatase of Legionella pneumophila (strain Corby).